A 296-amino-acid chain; its full sequence is MEELIAIVGPTAVGKTELAVAWARRINGEIVSADSRQIYRWMDIGTAKPSPEEQAQAPHHLIDIRDPDQPFSLAEFCDLATAAIADIRGRGRIPLLVGGTGQYLAAFLEGWQVPRVAPQPDLRAELELIAAREGPAVLHARLAAVDPVAASRIPPTNVRRVVRALEVYLVSGEPISRLQERKEPPFRPRTIWLHRPRAELYARADARIERMIAAGLVEEVAGLLARGYDWSLPAMSSLGYIQFRPYFTGEADLPTCIERLRFDTHAFIRRQEMWFRRLPNLEIWTPDHPSWREITA.

9–16 (GPTAVGKT) contacts ATP. 11 to 16 (TAVGKT) is a binding site for substrate. The interval 34–37 (DSRQ) is interaction with substrate tRNA.

Belongs to the IPP transferase family. Monomer. The cofactor is Mg(2+).

It catalyses the reaction adenosine(37) in tRNA + dimethylallyl diphosphate = N(6)-dimethylallyladenosine(37) in tRNA + diphosphate. Its function is as follows. Catalyzes the transfer of a dimethylallyl group onto the adenine at position 37 in tRNAs that read codons beginning with uridine, leading to the formation of N6-(dimethylallyl)adenosine (i(6)A). The polypeptide is tRNA dimethylallyltransferase (Chloroflexus aurantiacus (strain ATCC 29366 / DSM 635 / J-10-fl)).